We begin with the raw amino-acid sequence, 237 residues long: Uridylate kinase (237 aa).

11 to 14 (KLSG) contributes to the ATP binding site. G53 provides a ligand contact to UMP. The ATP site is built by G54 and R58. UMP-binding positions include D73 and 134–141 (TGNPFFTT). 3 residues coordinate ATP: T161, Y167, and D170.

Belongs to the UMP kinase family. As to quaternary structure, homohexamer.

It localises to the cytoplasm. The enzyme catalyses UMP + ATP = UDP + ADP. The protein operates within pyrimidine metabolism; CTP biosynthesis via de novo pathway; UDP from UMP (UMPK route): step 1/1. With respect to regulation, inhibited by UTP. Catalyzes the reversible phosphorylation of UMP to UDP. This Burkholderia lata (strain ATCC 17760 / DSM 23089 / LMG 22485 / NCIMB 9086 / R18194 / 383) protein is Uridylate kinase.